The primary structure comprises 141 residues: Single-stranded DNA-binding protein 2 (141 aa).

Residues 1-104 (MLNRTVLVGR…VVADSVQFLE (104 aa)) form the SSB domain. Positions 104 to 141 (EPKNNNQQQNNNYQQQRQTQTGNNPFDNNADSIEDLPF) are disordered. Residues 107–127 (NNNQQQNNNYQQQRQTQTGNN) show a composition bias toward low complexity.

As to quaternary structure, homotetramer.

This is Single-stranded DNA-binding protein 2 (ssb-p) from Staphylococcus aureus (strain Mu50 / ATCC 700699).